A 304-amino-acid chain; its full sequence is Uricase (304 aa).

Ala2 carries the N-acetylalanine modification. 2 positions are modified to N6-acetyllysine; alternate: Lys10 and Lys23. N6-succinyllysine; alternate occurs at positions 10 and 23. Lys23 functions as the Charge relay system in the catalytic mechanism. An N6-acetyllysine mark is found at Lys27 and Lys36. 2 positions are modified to phosphoserine: Ser39 and Ser63. Thr68 functions as the Charge relay system in the catalytic mechanism. Residues Thr68 and Asp69 each contribute to the urate site. Residues Lys118, Lys122, and Lys164 each carry the N6-acetyllysine modification. Residue Phe170 participates in urate binding. Lys175 and Lys185 each carry N6-acetyllysine. Arg187 contacts urate. 2 positions are modified to N6-acetyllysine; alternate: Lys221 and Lys228. N6-succinyllysine; alternate is present on residues Lys221 and Lys228. Ser232 is modified (phosphoserine). Residues Val235, Gln236, and Asn262 each coordinate urate. The active-site Charge relay system is the His264. At Lys278 the chain carries N6-acetyllysine. Tyr289 is subject to Phosphotyrosine. A Microbody targeting signal motif is present at residues 302 to 304 (SRL).

This sequence belongs to the uricase family. Homotetramer.

Its subcellular location is the peroxisome. The enzyme catalyses urate + O2 + H2O = 5-hydroxyisourate + H2O2. The protein operates within purine metabolism; urate degradation; (S)-allantoin from urate: step 1/3. Its function is as follows. Catalyzes the oxidation of uric acid to 5-hydroxyisourate, which is further processed to form (S)-allantoin. In Bos taurus (Bovine), this protein is Uricase (UOX).